A 249-amino-acid polypeptide reads, in one-letter code: Proteasome activator complex subunit 1 (249 aa).

The disordered stretch occupies residues 60-102 (PLDIPVPDPVKEKEKEERKKQQEKEDKDEKKKGEDEDKGPPCG). Positions 68 to 98 (PVKEKEKEERKKQQEKEDKDEKKKGEDEDKG) are enriched in basic and acidic residues.

Belongs to the PA28 family. As to quaternary structure, heterodimer of PSME1 and PSME2, which forms a hexameric ring. PSME1 can form homoheptamers.

Functionally, implicated in immunoproteasome assembly and required for efficient antigen processing. The PA28 activator complex enhances the generation of class I binding peptides by altering the cleavage pattern of the proteasome. The protein is Proteasome activator complex subunit 1 (PSME1) of Homo sapiens (Human).